The primary structure comprises 529 residues: Lysophosphatidylcholine acyltransferase 2 (529 aa).

The Cytoplasmic portion of the chain corresponds to 1–50 (MPPPHRVFALPRQQSLLLPAVINPFVHDLSLSTADITKCFLLGIILVPLR). Residues 51-71 (AIFLLLVLLVMWPVSVIITFG) form a helical; Signal-anchor for type II membrane protein membrane-spanning segment. Over 72–529 (QSLKGVVEPM…EDSASDKKDD (458 aa)) the chain is Lumenal. Positions 128 to 133 (HSSFFD) match the HXXXXD motif motif. An EGTC motif motif is present at residues 202-205 (EGTC). An N-linked (GlcNAc...) asparagine glycan is attached at asparagine 207. EF-hand domains follow at residues 373-408 (PISP…LCRP), 410-445 (NNEE…ALGV), and 449-480 (DVHS…HPEY). Residues aspartate 386, asparagine 388, aspartate 390, threonine 392, glutamate 397, aspartate 423, aspartate 425, aspartate 427, cysteine 429, glutamate 434, aspartate 458, aspartate 460, serine 462, histidine 464, and glutamate 469 each coordinate Ca(2+).

The protein belongs to the 1-acyl-sn-glycerol-3-phosphate acyltransferase family.

The protein localises to the endoplasmic reticulum membrane. Its subcellular location is the golgi apparatus membrane. The protein resides in the cell membrane. It is found in the lipid droplet. The catalysed reaction is a 1-acyl-sn-glycero-3-phosphocholine + an acyl-CoA = a 1,2-diacyl-sn-glycero-3-phosphocholine + CoA. It carries out the reaction a 1-O-alkyl-sn-glycero-3-phosphocholine + acetyl-CoA = a 1-O-alkyl-2-acetyl-sn-glycero-3-phosphocholine + CoA. It catalyses the reaction a 1-acyl-sn-glycero-3-phosphate + an acyl-CoA = a 1,2-diacyl-sn-glycero-3-phosphate + CoA. The enzyme catalyses a 1-O-(1Z-alkenyl)-sn-glycero-3-phosphocholine + an acyl-CoA = a 1-O-(1Z-alkenyl)-2-acyl-sn-glycero-3-phosphocholine + CoA. The catalysed reaction is 1-hexadecanoyl-sn-glycero-3-phosphate + (9Z)-octadecenoyl-CoA = 1-hexadecanoyl-2-(9Z-octadecenoyl)-sn-glycero-3-phosphate + CoA. It carries out the reaction 1-(9Z-octadecenoyl)-sn-glycero-3-phosphate + (9Z)-octadecenoyl-CoA = 1,2-di-(9Z-octadecenoyl)-sn-glycero-3-phosphate + CoA. It catalyses the reaction 1-(9Z-octadecenoyl)-sn-glycero-3-phosphate + hexadecanoyl-CoA = 1-(9Z)-octadecenoyl-2-hexadecanoyl-sn-glycero-3-phosphate + CoA. The enzyme catalyses 1-heptadecanoyl-sn-glycero-3-phosphate + (9Z)-octadecenoyl-CoA = 1-heptadecanoyl-2-(9Z)-octadecenoyl-sn-glycero-3-phosphate + CoA. The catalysed reaction is 1-octadecanoyl-sn-glycero-3-phosphate + (9Z)-octadecenoyl-CoA = 1-octadecanoyl-2-(9Z-octadecenoyl)-sn-glycero-3-phosphate + CoA. It carries out the reaction heptadecanoyl-CoA + 1-(9Z-octadecenoyl)-sn-glycero-3-phosphate = 1-(9Z)-octadecenoyl-2-heptadecanoyl-sn-glycero-3-phosphate + CoA. It catalyses the reaction 1-(9Z-octadecenoyl)-sn-glycero-3-phosphate + (9Z,12Z)-octadecadienoyl-CoA = 1-(9Z)-octadecenoyl-2-(9Z,12Z)-octadecadienoyl-sn-glycero-3-phosphate + CoA. The enzyme catalyses 1-(9Z-octadecenoyl)-sn-glycero-3-phosphate + tetradecanoyl-CoA = 1-(9Z)-octadecenoyl-2-tetradecanoyl-sn-glycero-3-phosphate + CoA. The catalysed reaction is pentadecanoyl-CoA + 1-(9Z-octadecenoyl)-sn-glycero-3-phosphate = 1-(9Z)-octadecenoyl-2-pentadecanoyl-sn-glycero-3-phosphate + CoA. It carries out the reaction nonadecanoyl-CoA + 1-(9Z-octadecenoyl)-sn-glycero-3-phosphate = 1-(9Z)-octadecenoyl-2-nonadecanoyl-sn-glycero-3-phosphate + CoA. It catalyses the reaction 1-hexadecanoyl-sn-glycero-3-phosphocholine + (9Z)-octadecenoyl-CoA = 1-hexadecanoyl-2-(9Z-octadecenoyl)-sn-glycero-3-phosphocholine + CoA. The enzyme catalyses 1-O-hexadecyl-sn-glycero-3-phosphocholine + acetyl-CoA = 1-O-hexadecyl-2-acetyl-sn-glycero-3-phosphocholine + CoA. The catalysed reaction is 1-O-octadecyl-sn-glycero-3-phosphocholine + acetyl-CoA = 1-O-octadecyl-2-acetyl-sn-glycero-3-phosphocholine + CoA. It carries out the reaction 1-hexadecanoyl-sn-glycero-3-phosphocholine + acetyl-CoA = 1-hexadecanoyl-2-acetyl-sn-glycero-3-phosphocholine + CoA. It catalyses the reaction 1-octadecanoyl-sn-glycero-3-phosphocholine + acetyl-CoA = 1-octadecanoyl-2-acetyl-sn-glycero-3-phosphocholine + CoA. The enzyme catalyses a 1-O-(1Z-alkenyl)-sn-glycero-3-phosphocholine + acetyl-CoA = 1-O-(1Z)-alkenyl-2-acetyl-sn-glycero-3-phosphocholine + CoA. The catalysed reaction is 1-O-octadecyl-sn-glycero-3-phosphocholine + (5Z,8Z,11Z,14Z)-eicosatetraenoyl-CoA = 1-O-octadecyl-2-(5Z,8Z,11Z,14Z)-eicosatetraenoyl-sn-glycero-3-phosphocholine + CoA. Its pathway is lipid metabolism; phospholipid metabolism. Its function is as follows. Exhibits both acyltransferase and acetyltransferase activities. Activity is calcium-dependent. Catalyzes the conversion of lysophosphatidylcholine (1-acyl-sn-glycero-3-phosphocholine or LPC) into phosphatidylcholine (1,2-diacyl-sn-glycero-3-phosphocholine or PC). Catalyzes the conversion 1-acyl-sn-glycerol-3-phosphate (lysophosphatidic acid or LPA) into 1,2-diacyl-sn-glycerol-3-phosphate (phosphatidic acid or PA) by incorporating an acyl moiety at the sn-2 position of the glycerol backbone. Involved in platelet-activating factor (PAF) biosynthesis by catalyzing the conversion of the PAF precursor, 1-O-alkyl-sn-glycero-3-phosphocholine (lyso-PAF) into 1-O-alkyl-2-acetyl-sn-glycero-3-phosphocholine (PAF). The chain is Lysophosphatidylcholine acyltransferase 2 (lpcat2) from Danio rerio (Zebrafish).